A 200-amino-acid chain; its full sequence is Pyrrolidone-carboxylate peptidase (200 aa).

Catalysis depends on residues E78, C141, and H165.

The protein belongs to the peptidase C15 family. Homotetramer.

The protein localises to the cytoplasm. The catalysed reaction is Release of an N-terminal pyroglutamyl group from a polypeptide, the second amino acid generally not being Pro.. Functionally, removes 5-oxoproline from various penultimate amino acid residues except L-proline. This chain is Pyrrolidone-carboxylate peptidase, found in Lactobacillus acidophilus (strain ATCC 700396 / NCK56 / N2 / NCFM).